We begin with the raw amino-acid sequence, 462 residues long: Glutamate--tRNA ligase 2 (462 aa).

A 'HIGH' region motif is present at residues 8 to 18 (PSPTGYLHIGG). Residues 236–240 (KLSKR) carry the 'KMSKS' region motif. Lys239 is an ATP binding site.

The protein belongs to the class-I aminoacyl-tRNA synthetase family. Glutamate--tRNA ligase type 1 subfamily. As to quaternary structure, monomer.

Its subcellular location is the cytoplasm. The enzyme catalyses tRNA(Glu) + L-glutamate + ATP = L-glutamyl-tRNA(Glu) + AMP + diphosphate. Its function is as follows. Catalyzes the attachment of glutamate to tRNA(Glu) in a two-step reaction: glutamate is first activated by ATP to form Glu-AMP and then transferred to the acceptor end of tRNA(Glu). This is Glutamate--tRNA ligase 2 from Nitratiruptor sp. (strain SB155-2).